The chain runs to 268 residues: Microtubule-associated protein RP/EB family member 1 (268 aa).

Ala2 carries the post-translational modification N-acetylalanine. Positions 14 to 116 (NLSRHDMLAW…FVQWFKKFFD (103 aa)) constitute a Calponin-homology (CH) domain. An N6-crotonyllysine modification is found at Lys66. A Phosphotyrosine modification is found at Tyr124. Positions 124 to 268 (YDPVAARQGQ…GGPQEEQEEY (145 aa)) are interaction with MTUS2/TIP150. The interval 146–187 (LNKPKKPLTSSSAAPQRPISTQRTAAAPKAGPGVVRKNPGVG) is disordered. Over residues 153-169 (LTSSSAAPQRPISTQRT) the composition is skewed to polar residues. Phosphoserine occurs at positions 155 and 165. Positions 185 to 255 (GVGNGDDEAA…LYATDEGFVI (71 aa)) constitute an EB1 C-terminal domain. Residues 185–268 (GVGNGDDEAA…GGPQEEQEEY (84 aa)) are interaction with CDK5RAP2. The segment at 206-211 (TVEDLE) is interaction with APC. The DCTN1-binding stretch occupies residues 208-268 (EDLEKERDFY…GGPQEEQEEY (61 aa)). Position 220 is an N6-acetyllysine (Lys220). The interval 220-242 (KLRNIELICQENEGENDPVLQRI) is APC-binding. An interaction with SKA1 region spans residues 232-255 (EGENDPVLQRIVDILYATDEGFVI).

It belongs to the MAPRE family. Homodimer. Heterodimer with MAPRE3. Interacts with DCTN1, DCTN2, TERF1 and dynein intermediate chain. Interaction with DIAPH1 and DIAPH2. Interacts (via C-terminal residues 206-211) with APC (via C-terminal residues 2674-2843); the interaction inhibits association with and bundling of F-actin. Interacts with CLASP2, DST, KIF2C and STIM1; probably required for their targeting to the growing microtubule plus ends. Interacts with MTUS2; interaction is direct and probably targets MTUS2 to microtubules. Interacts (via C-terminus) with SKA1 (via SXIP motif); the interaction is direct and stabilizes the kinetochore-microtubule attachment of the SKA1 complex. Interacts with APC2. Interacts with CLASP1. Interacts with CDK5RAP2. Interacts with MACF1. Interacts with RABL2/RABL2A; binds preferentially to GTP-bound RABL2. Interacts with KCNAB2. Interacts (via C-terminus) with CLIP1. Interacts with SLAIN2 and SLAIN1. Interacts with KIF18B; this interaction is required for efficient accumulation of KIF18B at microtubule plus ends. Interacts with MISP. Interacts with KNSTRN. Interacts with NCKAP5L. Interacts with CAMSAP2. Interacts with PDE4DIP isoform 13/MMG8/SMYLE; this interaction is required for its recruitment to the Golgi apparatus. Forms a pericentrosomal complex with AKAP9, CDK5RAP2 and PDE4DIP isoform 13/MMG8/SMYLE; within this complex, MAPRE1 binding to CDK5RAP2 may be mediated by PDE4DIP. Interacts with AKNA. Interacts with GAS2L1, GAS2L2, and GAS2L3. Interacts with RARRES1 and AGBL2. Acetylation at Lys-220 by KAT2B/PCAF promotes dynamic kinetochore-microtubule interactions in early mitosis. In terms of processing, crotonylated by KAT5 during mitosis, promoting astral microtubule plasticity and dynamic connection between astral microtubules and the cortex during mitotic chromosome segregation, thereby ensuring accurate spindle positioning in mitosis. Decrotonylated by HDAC3. As to expression, ubiquitously expressed.

The protein resides in the cytoplasm. The protein localises to the cytoskeleton. It is found in the microtubule organizing center. It localises to the centrosome. Its subcellular location is the golgi apparatus. The protein resides in the spindle. The protein localises to the spindle pole. In terms of biological role, plus-end tracking protein (+TIP) that binds to the plus-end of microtubules and regulates the dynamics of the microtubule cytoskeleton. Recruits other +TIP proteins to microtubules by binding to a conserved Ser-X-Leu-Pro (SXLP) motif in their polypeptide chains. Promotes cytoplasmic microtubule nucleation and elongation. Involved in mitotic spindle positioning by stabilizing microtubules and promoting dynamic connection between astral microtubules and the cortex during mitotic chromosome segregation. Assists chromosome alignment in metaphase by recruiting the SKA complex to the spindle and stabilizing its interactions with microtubule bundles (K-fibers). Also acts as a regulator of minus-end microtubule organization: interacts with the complex formed by AKAP9 and PDE4DIP, leading to recruit CAMSAP2 to the Golgi apparatus, thereby tethering non-centrosomal minus-end microtubules to the Golgi, an important step for polarized cell movement. Promotes elongation of CAMSAP2-decorated microtubule stretches on the minus-end of microtubules. Acts as a regulator of autophagosome transport via interaction with CAMSAP2. Functions downstream of Rho GTPases and DIAPH1 in stable microtubule formation. May play a role in cell migration. In Homo sapiens (Human), this protein is Microtubule-associated protein RP/EB family member 1.